The following is a 163-amino-acid chain: Early nodulin-like protein 20 (163 aa).

An N-terminal signal peptide occupies residues 1 to 25; the sequence is MMGKYLWALVYVTVMILIIVVEVES. Residues 26 to 126 form the Phytocyanin domain; that stretch reads SLHRVGGGRY…GMKLAITVLP (101 aa). Asn42, Asn63, Asn73, Asn88, and Asn135 each carry an N-linked (GlcNAc...) asparagine glycan. A disulfide bond links Cys80 and Cys114. The GPI-anchor amidated serine moiety is linked to residue Ser138. Residues 139 to 163 constitute a propeptide, removed in mature form; the sequence is TTTPLIPPNAITAAILIFAFKALLL.

It belongs to the early nodulin-like (ENODL) family.

It localises to the cell membrane. In terms of biological role, may act as a carbohydrate transporter. This chain is Early nodulin-like protein 20, found in Arabidopsis thaliana (Mouse-ear cress).